Reading from the N-terminus, the 844-residue chain is Neuronal PAS domain-containing protein 4B (844 aa).

The interval Lys61–Arg74 is basic motif; degenerate. One can recognise a bHLH domain in the interval Lys61–Ser114. A helix-loop-helix motif region spans residues Asp75–Ser114. PAS domains are found at residues Ser132–His190 and Asp294–Gly343. Polar residues predominate over residues Ser410 to Gln422. Disordered stretches follow at residues Ser410–Ser432, Gly444–His479, Pro702–Gln725, and Thr757–Ala784. A compositionally biased stretch (pro residues) spans Pro704–Pro716.

In terms of assembly, efficient DNA binding requires dimerization with another bHLH protein.

The protein localises to the nucleus. Functionally, transcription factor expressed in neurons of the brain that regulates the excitatory-inhibitory balance within neural circuits and is required for contextual memory in the hippocampus. Plays a key role in the structural and functional plasticity of neurons. Acts as an early-response transcription factor in both excitatory and inhibitory neurons, where it induces distinct but overlapping sets of late-response genes in these two types of neurons, allowing the synapses that form on inhibitory and excitatory neurons to be modified by neuronal activity in a manner specific to their function within a circuit, thereby facilitating appropriate circuit responses to sensory experience. The sequence is that of Neuronal PAS domain-containing protein 4B (npas4b) from Danio rerio (Zebrafish).